The primary structure comprises 438 residues: uncharacterized protein (438 aa).

This is an uncharacterized protein from Methanocaldococcus jannaschii (strain ATCC 43067 / DSM 2661 / JAL-1 / JCM 10045 / NBRC 100440) (Methanococcus jannaschii).